Consider the following 239-residue polypeptide: Uridylate kinase (239 aa).

12–15 (KLSG) is an ATP binding site. The interval 21–26 (GEQGFG) is involved in allosteric activation by GTP. Residue Gly55 participates in UMP binding. ATP contacts are provided by Gly56 and Arg60. UMP contacts are provided by residues Asp75 and 136-143 (TGNPYFST). ATP-binding residues include Thr163, Tyr169, and Asp172.

It belongs to the UMP kinase family. Homohexamer.

It localises to the cytoplasm. The catalysed reaction is UMP + ATP = UDP + ADP. Its pathway is pyrimidine metabolism; CTP biosynthesis via de novo pathway; UDP from UMP (UMPK route): step 1/1. Its activity is regulated as follows. Allosterically activated by GTP. Inhibited by UTP. Its function is as follows. Catalyzes the reversible phosphorylation of UMP to UDP. This Koribacter versatilis (strain Ellin345) protein is Uridylate kinase.